Here is a 1406-residue protein sequence, read N- to C-terminus: DNA topoisomerase 2 (1406 aa).

Residues Asn69, Asn98, Ser126–Asn128, and Gly139–Lys146 contribute to the ATP site. The segment at Lys332 to Lys334 is interaction with DNA. ATP is bound at residue Gln363 to Lys365. In terms of domain architecture, Toprim spans Cys441–Ile555. The Mg(2+) site is built by Glu447, Asp524, and Asp526. The region spanning Ile690–Leu1159 is the Topo IIA-type catalytic domain. Tyr780 (O-(5'-phospho-DNA)-tyrosine intermediate) is an active-site residue. The interval Lys963–Asn972 is interaction with DNA. Residues Glu1079–Glu1089 show a composition bias toward acidic residues. Disordered regions lie at residues Glu1079–Pro1106, Lys1183–Lys1215, Lys1230–Gly1287, and Asp1303–Glu1406. The segment covering Glu1090–Glu1100 has biased composition (basic and acidic residues). Residues Lys1204–Ile1214 are compositionally biased toward basic residues. Polar residues predominate over residues Asp1261–Phe1274. The segment covering Ala1326–Ala1336 has biased composition (basic residues). Composition is skewed to acidic residues over residues Ser1341 to Val1359 and Glu1381 to Glu1406.

Belongs to the type II topoisomerase family. In terms of assembly, homodimer. It depends on Mg(2+) as a cofactor. Mn(2+) serves as cofactor. Requires Ca(2+) as cofactor.

It is found in the nucleus. The catalysed reaction is ATP-dependent breakage, passage and rejoining of double-stranded DNA.. Functionally, control of topological states of DNA by transient breakage and subsequent rejoining of DNA strands. Topoisomerase II makes double-strand breaks. The chain is DNA topoisomerase 2 (TOP2) from Candida glabrata (strain ATCC 2001 / BCRC 20586 / JCM 3761 / NBRC 0622 / NRRL Y-65 / CBS 138) (Yeast).